The following is a 1430-amino-acid chain: MNELMNIFGQPQGPQSFDQIRISIASPERIRSWSFGEIKKPETINYRTFKPERDGLFCARIFGPIKDYECLCGKYKRMKYRGIICEKCGVEVTLSKVRRERMGHIELASPVAHIWFLKSLPSRIGLLLDMTLKDLERILYFENYVVIEPGLTDLKLHELLSEDQLLDKQDKFGEDAFTAKIGAEAMKDLLANLDLIEEKATCREELKETASEAKRKKLVKRLKLIEAFLGPSQEVEDVAAYERFEGYKERIERPDARPLFKIFPDATRPEWMILEVVPVIPPELRPLVPLDGGRFATSDLNDLYRRVINRNNRLKRLIELKAPDIIVRNEKRMLQEAVDALFDNGRRGRVITGANKRPLKSISDMLKGKQGRFRQNLLGKRVDYSGRSVIVVGPELKLHQCGLPKKMALELFKPFIYAKLELYGLASTIKAAKRMVEKERPEVWDILEEVIREHPVMLNRAPTLHRLGIQAFEPTLIEGKAIQLHPLVCTAFNADFDGDQMAVHVPLSLEAQLEARVLMMSTNNILSPASGRPIIVPSQDIVLGLYYITMELPGMVGEGMAFGTIGEIEHALASKAVSLHAKIQCRYKTVDDEGNPITVRVTTTPGRMLLSEILPRHKAIKFDLINRLLTKKEIGNIIDVVYRHCGQKETVIFADRLMKLGFSNAFKAGISFGKDDMVIPAEKEILIREAQDRVKEYEQQYLDGLITQGEKYNKVVDVWSETTEKVASAMMKVIEQPKPGFGVNSVYMMAHSGARGSAAQIKQLAGMRGLMAKPSGEIIETPIISNFKEGLTVLEYFNSTHGARKGLADTALKTANSGYLTRRLVDVAQDAIIVENDCGTTRGITMKAVIDGGEIVVPLGERILGRTVSVDIIHPLTGEMLVAAGDMITEREVEVIERAGIDSVHIRSVLTCETRDGVCAQCYGRDLARGTRVNMGEAVGVIAAQSIGEPGTQLTMRTFHIGGAAQRGAEQSFIEATLDAKVMVKNRNLVMNSEGVPVVMGRNCELALLDEQGRERARHRVPYGAKLNKALAADGAMIKKGDRLAEWDPYTLPILTEREGIANYVDLVEGVSVREVVDEATGISSKVVTDWRQQPRGADLRPRITLRDETGEVVKLPNGLEARYYMSVDAILSVENGARVRAGDVLARIPRESSKTRDITGGLPRVAELFEARRPKDFAIISDIDGRVEFGKDYKTKRRIVVRNDETGEEKEYLIPKGKHISVQEGDYVQKGDLLMDGNPVPHDILAVMGVESLANYLINEIQDVYRLQGVKINDKHIEVIVRQMLQKVEITDPGDTTLLAGEQVDRTEFEEENRLVQQRMNEGEQDLRFAIAKPVLQGITKASLQTRSFISAASFQETTRVLTEAAVQGKVDNLEGLKENVIVGRLIPAGTGSVVNRLKQIAAERDKALQLADGVDETPALADGGEAAA.

Residues Cys70, Cys72, Cys85, and Cys88 each coordinate Zn(2+). 3 residues coordinate Mg(2+): Asp495, Asp497, and Asp499. Zn(2+) contacts are provided by Cys838, Cys912, Cys919, and Cys922.

The protein belongs to the RNA polymerase beta' chain family. As to quaternary structure, the RNAP catalytic core consists of 2 alpha, 1 beta, 1 beta' and 1 omega subunit. When a sigma factor is associated with the core the holoenzyme is formed, which can initiate transcription. It depends on Mg(2+) as a cofactor. Zn(2+) serves as cofactor.

It catalyses the reaction RNA(n) + a ribonucleoside 5'-triphosphate = RNA(n+1) + diphosphate. Its function is as follows. DNA-dependent RNA polymerase catalyzes the transcription of DNA into RNA using the four ribonucleoside triphosphates as substrates. This is DNA-directed RNA polymerase subunit beta' from Rhodospirillum centenum (strain ATCC 51521 / SW).